We begin with the raw amino-acid sequence, 784 residues long: LPS-assembly protein LptD (784 aa).

Residues 1–24 (MKKRIPTLLATMIATALYSQQGLA) form the signal peptide. Intrachain disulfides connect cysteine 31–cysteine 724 and cysteine 173–cysteine 725.

The protein belongs to the LptD family. As to quaternary structure, component of the lipopolysaccharide transport and assembly complex. Interacts with LptE and LptA. Contains two intramolecular disulfide bonds.

The protein localises to the cell outer membrane. Together with LptE, is involved in the assembly of lipopolysaccharide (LPS) at the surface of the outer membrane. This is LPS-assembly protein LptD from Shigella flexneri.